The sequence spans 412 residues: Proteasome-activating nucleotidase (412 aa).

Residues 18–72 are a coiled coil; it reads YRYLVDRVAGMESQNQELKEQIRQLESDKRYIETQKIRYEREVRKLKSEIEHLKT. ATP is bound by residues 197 to 202 and His-336; that span reads GTGKTL. A docks into pockets in the proteasome alpha-ring to cause gate opening region spans residues 410–412; sequence MFA.

Belongs to the AAA ATPase family. Homohexamer. The hexameric complex has a two-ring architecture resembling a top hat that caps the 20S proteasome core at one or both ends. Upon ATP-binding, the C-terminus of PAN interacts with the alpha-rings of the proteasome core by binding to the intersubunit pockets.

The protein resides in the cytoplasm. Its function is as follows. ATPase which is responsible for recognizing, binding, unfolding and translocation of substrate proteins into the archaeal 20S proteasome core particle. Is essential for opening the gate of the 20S proteasome via an interaction with its C-terminus, thereby allowing substrate entry and access to the site of proteolysis. Thus, the C-termini of the proteasomal ATPase function like a 'key in a lock' to induce gate opening and therefore regulate proteolysis. Unfolding activity requires energy from ATP hydrolysis, whereas ATP binding alone promotes ATPase-20S proteasome association which triggers gate opening, and supports translocation of unfolded substrates. This is Proteasome-activating nucleotidase from Methanospirillum hungatei JF-1 (strain ATCC 27890 / DSM 864 / NBRC 100397 / JF-1).